We begin with the raw amino-acid sequence, 376 residues long: Probable tRNA sulfurtransferase (376 aa).

The THUMP domain maps to 51–152 (EENLKNLKYV…KNSVYVFDKS (102 aa)). ATP is bound by residues 170 to 171 (LI), 195 to 196 (TF), R252, G274, and Q283.

Belongs to the ThiI family.

The protein localises to the cytoplasm. The enzyme catalyses [ThiI sulfur-carrier protein]-S-sulfanyl-L-cysteine + a uridine in tRNA + 2 reduced [2Fe-2S]-[ferredoxin] + ATP + H(+) = [ThiI sulfur-carrier protein]-L-cysteine + a 4-thiouridine in tRNA + 2 oxidized [2Fe-2S]-[ferredoxin] + AMP + diphosphate. It catalyses the reaction [ThiS sulfur-carrier protein]-C-terminal Gly-Gly-AMP + S-sulfanyl-L-cysteinyl-[cysteine desulfurase] + AH2 = [ThiS sulfur-carrier protein]-C-terminal-Gly-aminoethanethioate + L-cysteinyl-[cysteine desulfurase] + A + AMP + 2 H(+). Its pathway is cofactor biosynthesis; thiamine diphosphate biosynthesis. Its function is as follows. Catalyzes the ATP-dependent transfer of a sulfur to tRNA to produce 4-thiouridine in position 8 of tRNAs, which functions as a near-UV photosensor. Also catalyzes the transfer of sulfur to the sulfur carrier protein ThiS, forming ThiS-thiocarboxylate. This is a step in the synthesis of thiazole, in the thiamine biosynthesis pathway. The sulfur is donated as persulfide by IscS. The chain is Probable tRNA sulfurtransferase from Mycoplasmopsis synoviae (strain 53) (Mycoplasma synoviae).